Here is a 118-residue protein sequence, read N- to C-terminus: Beta-2-microglobulin (118 aa).

The N-terminal stretch at M1–A20 is a signal peptide. In terms of domain architecture, Ig-like C1-type spans P25–K113. C45 and C99 are oxidised to a cystine.

This sequence belongs to the beta-2-microglobulin family. In terms of assembly, heterodimer of an alpha chain and a beta chain. Beta-2-microglobulin is the beta-chain of major histocompatibility complex class I molecules.

It is found in the secreted. Its function is as follows. Component of the class I major histocompatibility complex (MHC). Involved in the presentation of peptide antigens to the immune system. This Felis catus (Cat) protein is Beta-2-microglobulin (B2M).